The primary structure comprises 206 residues: Protein GrpE (206 aa).

The disordered stretch occupies residues 1 to 36 (MTDSNGPKDNNQDQAQAAADPVVSKPYIMPDDPEDG).

The protein belongs to the GrpE family. In terms of assembly, homodimer.

Its subcellular location is the cytoplasm. In terms of biological role, participates actively in the response to hyperosmotic and heat shock by preventing the aggregation of stress-denatured proteins, in association with DnaK and GrpE. It is the nucleotide exchange factor for DnaK and may function as a thermosensor. Unfolded proteins bind initially to DnaJ; upon interaction with the DnaJ-bound protein, DnaK hydrolyzes its bound ATP, resulting in the formation of a stable complex. GrpE releases ADP from DnaK; ATP binding to DnaK triggers the release of the substrate protein, thus completing the reaction cycle. Several rounds of ATP-dependent interactions between DnaJ, DnaK and GrpE are required for fully efficient folding. This chain is Protein GrpE, found in Rhodopseudomonas palustris (strain HaA2).